The primary structure comprises 262 residues: MSTHSNHPFHLVDYSPWPLTGAIGAMTTVSGMVKWFHQYDISLFLLGNIITILTVYQWWRDVSREGTYQGLHTYAVTIGLRWGMILFILSEVLFFVSFFWAFFHSSLSPAIELGASWPPMGIISFNPFQIPLLNTAILLASGVTVTWAHHSLMESNHSQTTQGLFFTVLLGIYFTILQAYEYIEAPFTIADSVYGSTFYMATGFHGVHVLIGTTFLLVCLLRHLNNHFSKNHHFGFEAAAWYWHFVDVVWLFLYITIYWWGG.

The next 6 helical transmembrane spans lie at 39-59, 83-103, 120-140, 163-183, 201-221, and 240-260; these read YDIS…YQWW, GMIL…WAFF, MGII…ILLA, GLFF…YEYI, ATGF…VCLL, and AWYW…IYWW.

Belongs to the cytochrome c oxidase subunit 3 family. As to quaternary structure, component of the cytochrome c oxidase (complex IV, CIV), a multisubunit enzyme composed of a catalytic core of 3 subunits and several supernumerary subunits. The complex exists as a monomer or a dimer and forms supercomplexes (SCs) in the inner mitochondrial membrane with ubiquinol-cytochrome c oxidoreductase (cytochrome b-c1 complex, complex III, CIII).

Its subcellular location is the mitochondrion inner membrane. The catalysed reaction is 4 Fe(II)-[cytochrome c] + O2 + 8 H(+)(in) = 4 Fe(III)-[cytochrome c] + 2 H2O + 4 H(+)(out). Component of the cytochrome c oxidase, the last enzyme in the mitochondrial electron transport chain which drives oxidative phosphorylation. The respiratory chain contains 3 multisubunit complexes succinate dehydrogenase (complex II, CII), ubiquinol-cytochrome c oxidoreductase (cytochrome b-c1 complex, complex III, CIII) and cytochrome c oxidase (complex IV, CIV), that cooperate to transfer electrons derived from NADH and succinate to molecular oxygen, creating an electrochemical gradient over the inner membrane that drives transmembrane transport and the ATP synthase. Cytochrome c oxidase is the component of the respiratory chain that catalyzes the reduction of oxygen to water. Electrons originating from reduced cytochrome c in the intermembrane space (IMS) are transferred via the dinuclear copper A center (CU(A)) of subunit 2 and heme A of subunit 1 to the active site in subunit 1, a binuclear center (BNC) formed by heme A3 and copper B (CU(B)). The BNC reduces molecular oxygen to 2 water molecules using 4 electrons from cytochrome c in the IMS and 4 protons from the mitochondrial matrix. This is Cytochrome c oxidase subunit 3 (mt:CoIII) from Drosophila yakuba (Fruit fly).